Reading from the N-terminus, the 106-residue chain is Nucleoid-associated protein Nwi_0368 (106 aa).

Belongs to the YbaB/EbfC family. In terms of assembly, homodimer.

It localises to the cytoplasm. Its subcellular location is the nucleoid. Functionally, binds to DNA and alters its conformation. May be involved in regulation of gene expression, nucleoid organization and DNA protection. The sequence is that of Nucleoid-associated protein Nwi_0368 from Nitrobacter winogradskyi (strain ATCC 25391 / DSM 10237 / CIP 104748 / NCIMB 11846 / Nb-255).